We begin with the raw amino-acid sequence, 715 residues long: Elongation factor G (715 aa).

Residues Asn8–Thr290 enclose the tr-type G domain. GTP is bound by residues Ala17–Thr24, Asp88–His92, and Asn142–Asp145.

It belongs to the TRAFAC class translation factor GTPase superfamily. Classic translation factor GTPase family. EF-G/EF-2 subfamily.

Its subcellular location is the cytoplasm. Functionally, catalyzes the GTP-dependent ribosomal translocation step during translation elongation. During this step, the ribosome changes from the pre-translocational (PRE) to the post-translocational (POST) state as the newly formed A-site-bound peptidyl-tRNA and P-site-bound deacylated tRNA move to the P and E sites, respectively. Catalyzes the coordinated movement of the two tRNA molecules, the mRNA and conformational changes in the ribosome. This is Elongation factor G from Ectopseudomonas mendocina (strain ymp) (Pseudomonas mendocina).